The sequence spans 72 residues: DNA-directed RNA polymerase subunit omega (72 aa).

The protein belongs to the RNA polymerase subunit omega family. In terms of assembly, the RNAP catalytic core consists of 2 alpha, 1 beta, 1 beta' and 1 omega subunit. When a sigma factor is associated with the core the holoenzyme is formed, which can initiate transcription.

The enzyme catalyses RNA(n) + a ribonucleoside 5'-triphosphate = RNA(n+1) + diphosphate. Its function is as follows. Promotes RNA polymerase assembly. Latches the N- and C-terminal regions of the beta' subunit thereby facilitating its interaction with the beta and alpha subunits. This Staphylococcus aureus (strain Mu3 / ATCC 700698) protein is DNA-directed RNA polymerase subunit omega.